A 640-amino-acid polypeptide reads, in one-letter code: 1,4-alpha-glucan branching enzyme GlgB (640 aa).

Residue Asp-318 is the Nucleophile of the active site. Glu-371 (proton donor) is an active-site residue.

It belongs to the glycosyl hydrolase 13 family. GlgB subfamily. As to quaternary structure, monomer.

The enzyme catalyses Transfers a segment of a (1-&gt;4)-alpha-D-glucan chain to a primary hydroxy group in a similar glucan chain.. It participates in glycan biosynthesis; glycogen biosynthesis. In terms of biological role, catalyzes the formation of the alpha-1,6-glucosidic linkages in glycogen by scission of a 1,4-alpha-linked oligosaccharide from growing alpha-1,4-glucan chains and the subsequent attachment of the oligosaccharide to the alpha-1,6 position. The sequence is that of 1,4-alpha-glucan branching enzyme GlgB from Francisella philomiragia subsp. philomiragia (strain ATCC 25017 / CCUG 19701 / FSC 153 / O#319-036).